Consider the following 183-residue polypeptide: Ferritin heavy chain (183 aa).

Position 1 is an N-acetylmethionine (M1). T2 is subject to N-acetylthreonine; in Ferritin heavy chain, N-terminally processed. The Ferritin-like diiron domain maps to 11-160 (QNYHQDSEAA…DHVTNLRKMG (150 aa)). The Fe cation site is built by E28, E63, H66, E108, and Q142. 2 positions are modified to phosphoserine: S179 and S183.

The protein belongs to the ferritin family. Oligomer of 24 subunits. There are two types of subunits: L (light) chain and H (heavy) chain. The major chain can be light or heavy, depending on the species and tissue type. The functional molecule forms a roughly spherical shell with a diameter of 12 nm and contains a central cavity into which the insoluble mineral iron core is deposited. Interacts with NCOA4; NCOA4 promotes targeting of the iron-binding ferritin complex to autolysosomes following starvation or iron depletion.

The protein resides in the cytoplasm. Its subcellular location is the lysosome. It is found in the cytoplasmic vesicle. The protein localises to the autophagosome. It catalyses the reaction 4 Fe(2+) + O2 + 4 H(+) = 4 Fe(3+) + 2 H2O. In terms of biological role, stores iron in a soluble, non-toxic, readily available form. Important for iron homeostasis. Has ferroxidase activity. Iron is taken up in the ferrous form and deposited as ferric hydroxides after oxidation. Also plays a role in delivery of iron to cells. Mediates iron uptake in capsule cells of the developing kidney. Delivery to lysosomes is mediated by the cargo receptor NCOA4 for autophagic degradation and release of iron. This Felis catus (Cat) protein is Ferritin heavy chain (FTH1).